A 203-amino-acid polypeptide reads, in one-letter code: MKNIEELILKAVELQSNGLVTGQIANELNVSRETVTWLLTRSKKDVVAPAPKDISVTWNSVGQSSYRLRCISQALCDMVIEKLERTQQDADLVIGIGLSGIPIATMMAEELEIDFAIFHDYDDQKGKTNQRGIFSRNFADVEGKKCIIVDDVVSSGATVTDVAEQLREVGATPIAVAVIVDKMNADMIANVPMSSLVRITRVD.

Belongs to the purine/pyrimidine phosphoribosyltransferase family. GfcR subfamily.

This Methanococcoides burtonii (strain DSM 6242 / NBRC 107633 / OCM 468 / ACE-M) protein is Transcriptional regulator GfcR.